The sequence spans 316 residues: Lys-63-specific deubiquitinase BRCC36 (316 aa).

A2 bears the N-acetylalanine mark. Residues 12–179 (VHLESDAFLV…YTCFQSIQAQ (168 aa)) form the MPN domain. Residues H122, H124, and D135 each coordinate Zn(2+). The JAMM motif signature appears at 122–135 (HSHPHITVWPSHVD). S258 is subject to Phosphoserine.

It belongs to the peptidase M67A family. BRCC36 subfamily. In terms of assembly, component of the ARISC complex, at least composed of UIMC1/RAP80, ABRAXAS1, BRCC3/BRCC36, BABAM2 and BABAM1/NBA1. Component of the BRCA1-A complex, at least composed of BRCA1, BARD1, UIMC1/RAP80, ABRAXAS1, BRCC3/BRCC36, babam2 and BABAM1/NBA1. In the BRCA1-A complex, interacts directly with ABRAXAS1 and babam2. Component of the BRISC complex, at least composed of ABRAXAS2, BRCC3/BRCC36, BABAM2 and BABAM1/NBA1. Identified in a complex with SHMT2 and the other subunits of the BRISC complex. In the BRISC complex, interacts directly with ABRAXAS2. Identified in a complex with ABRAXAS2 and NUMA1. The BRISC complex interacts with the CSN complex. Component of the BRCA1/BRCA2 containing complex (BRCC), which also contains BRCA1, BRCA2, BARD1, BABAM2 and RAD51. BRCC is a ubiquitin E3 ligase complex that enhances cellular survival following DNA damage. Interacts with BRCA1. Binds polyubiquitin. Interacts with PWWP2B. Interacts with HDAC1; this interaction is enhanced in the presence of PWWP2B. Requires Zn(2+) as cofactor. As to expression, heart, brain, placenta, lung, liver, skeletal muscle, kidney and pancreas. Aberrantly expressed in the vast majority of breast tumors.

The protein resides in the nucleus. Its subcellular location is the cytoplasm. The protein localises to the cytoskeleton. It localises to the spindle pole. Metalloprotease that specifically cleaves 'Lys-63'-linked polyubiquitin chains. Does not have activity toward 'Lys-48'-linked polyubiquitin chains. Component of the BRCA1-A complex, a complex that specifically recognizes 'Lys-63'-linked ubiquitinated histones H2A and H2AX at DNA lesions sites, leading to target the BRCA1-BARD1 heterodimer to sites of DNA damage at double-strand breaks (DSBs). In the BRCA1-A complex, it specifically removes 'Lys-63'-linked ubiquitin on histones H2A and H2AX, antagonizing the RNF8-dependent ubiquitination at double-strand breaks (DSBs). Catalytic subunit of the BRISC complex, a multiprotein complex that specifically cleaves 'Lys-63'-linked ubiquitin in various substrates. Mediates the specific 'Lys-63'-specific deubiquitination associated with the COP9 signalosome complex (CSN), via the interaction of the BRISC complex with the CSN complex. The BRISC complex is required for normal mitotic spindle assembly and microtubule attachment to kinetochores via its role in deubiquitinating NUMA1. Plays a role in interferon signaling via its role in the deubiquitination of the interferon receptor IFNAR1; deubiquitination increases IFNAR1 activity by enhancing its stability and cell surface expression. Acts as a regulator of the NLRP3 inflammasome by mediating deubiquitination of NLRP3, leading to NLRP3 inflammasome assembly. Down-regulates the response to bacterial lipopolysaccharide (LPS) via its role in IFNAR1 deubiquitination. Deubiquitinates HDAC1 and PWWP2B leading to their stabilization. The sequence is that of Lys-63-specific deubiquitinase BRCC36 (BRCC3) from Homo sapiens (Human).